Reading from the N-terminus, the 349-residue chain is Methylthioribose-1-phosphate isomerase (349 aa).

Residues 49-51, Arg93, and Gln201 each bind substrate; that span reads RGA. Asp242 acts as the Proton donor in catalysis. 252-253 contacts substrate; it reads NK.

It belongs to the EIF-2B alpha/beta/delta subunits family. MtnA subfamily.

The catalysed reaction is 5-(methylsulfanyl)-alpha-D-ribose 1-phosphate = 5-(methylsulfanyl)-D-ribulose 1-phosphate. The protein operates within amino-acid biosynthesis; L-methionine biosynthesis via salvage pathway; L-methionine from S-methyl-5-thio-alpha-D-ribose 1-phosphate: step 1/6. In terms of biological role, catalyzes the interconversion of methylthioribose-1-phosphate (MTR-1-P) into methylthioribulose-1-phosphate (MTRu-1-P). The sequence is that of Methylthioribose-1-phosphate isomerase from Petrotoga mobilis (strain DSM 10674 / SJ95).